Here is a 125-residue protein sequence, read N- to C-terminus: Glycine cleavage system H protein (125 aa).

In terms of domain architecture, Lipoyl-binding spans serine 22 to threonine 104. N6-lipoyllysine is present on lysine 63.

The protein belongs to the GcvH family. The glycine cleavage system is composed of four proteins: P, T, L and H. Requires (R)-lipoate as cofactor.

Functionally, the glycine cleavage system catalyzes the degradation of glycine. The H protein shuttles the methylamine group of glycine from the P protein to the T protein. Is also involved in protein lipoylation via its role as an octanoyl/lipoyl carrier protein intermediate. The protein is Glycine cleavage system H protein of Listeria welshimeri serovar 6b (strain ATCC 35897 / DSM 20650 / CCUG 15529 / CIP 8149 / NCTC 11857 / SLCC 5334 / V8).